Here is a 341-residue protein sequence, read N- to C-terminus: Mediator of RNA polymerase II transcription subunit 18 (341 aa).

Positions 139–216 (KVMDKEKVQS…KEHSEGNASQ (78 aa)) are disordered. A compositionally biased stretch (basic and acidic residues) spans 163-211 (EDKKENIKKEESGEEVKGSGEEVKGSGEEVKGSGEEAKKSGEEAKEHSE).

The protein belongs to the Mediator complex subunit 18 family. In terms of assembly, component of the Mediator complex.

It localises to the nucleus. Functionally, component of the Mediator complex, a coactivator involved in the regulated transcription of nearly all RNA polymerase II-dependent genes. Mediator functions as a bridge to convey information from gene-specific regulatory proteins to the basal RNA polymerase II transcription machinery. Mediator is recruited to promoters by direct interactions with regulatory proteins and serves as a scaffold for the assembly of a functional preinitiation complex with RNA polymerase II and the general transcription factors. The polypeptide is Mediator of RNA polymerase II transcription subunit 18 (SRB5) (Debaryomyces hansenii (strain ATCC 36239 / CBS 767 / BCRC 21394 / JCM 1990 / NBRC 0083 / IGC 2968) (Yeast)).